The sequence spans 269 residues: Hemin import ATP-binding protein HmuV (269 aa).

The region spanning 5–242 is the ABC transporter domain; sequence LDAEAASFAI…SLIRRVFDIA (238 aa). Position 37–44 (37–44) interacts with ATP; it reads GPNGAGKS.

Belongs to the ABC transporter superfamily. Heme (hemin) importer (TC 3.A.1.14.5) family. The complex is composed of two ATP-binding proteins (HmuV), two transmembrane proteins (HmuU) and a solute-binding protein (HmuT).

The protein resides in the cell inner membrane. Part of the ABC transporter complex HmuTUV involved in hemin import. Responsible for energy coupling to the transport system. The chain is Hemin import ATP-binding protein HmuV from Rhodopseudomonas palustris (strain BisB18).